Reading from the N-terminus, the 351-residue chain is Fructose-1,6-bisphosphatase class 1 1 (351 aa).

Residues E84, D106, L108, and D109 each coordinate Mg(2+). Substrate-binding positions include 109-112 (DGSS) and N205. E277 is a Mg(2+) binding site.

This sequence belongs to the FBPase class 1 family. As to quaternary structure, homotetramer. Requires Mg(2+) as cofactor.

Its subcellular location is the cytoplasm. The catalysed reaction is beta-D-fructose 1,6-bisphosphate + H2O = beta-D-fructose 6-phosphate + phosphate. Its pathway is carbohydrate biosynthesis; Calvin cycle. The polypeptide is Fructose-1,6-bisphosphatase class 1 1 (Methylibium petroleiphilum (strain ATCC BAA-1232 / LMG 22953 / PM1)).